Here is a 121-residue protein sequence, read N- to C-terminus: Large ribosomal subunit protein uL22 (121 aa).

The protein belongs to the universal ribosomal protein uL22 family. As to quaternary structure, part of the 50S ribosomal subunit.

In terms of biological role, this protein binds specifically to 23S rRNA; its binding is stimulated by other ribosomal proteins, e.g. L4, L17, and L20. It is important during the early stages of 50S assembly. It makes multiple contacts with different domains of the 23S rRNA in the assembled 50S subunit and ribosome. The globular domain of the protein is located near the polypeptide exit tunnel on the outside of the subunit, while an extended beta-hairpin is found that lines the wall of the exit tunnel in the center of the 70S ribosome. The polypeptide is Large ribosomal subunit protein uL22 (Synechococcus sp. (strain CC9311)).